A 285-amino-acid chain; its full sequence is Probable nudix hydrolase C6G9.05 (285 aa).

The Nudix hydrolase domain maps to 114–254 (TRFASVLMPL…DLLYVEFNID (141 aa)). The Nudix box signature appears at 153–175 (GRVEPSDGSHYYAALRETYEEIG). Glutamate 169 and glutamate 173 together coordinate Mg(2+).

It belongs to the Nudix hydrolase family. PCD1 subfamily. It depends on Mn(2+) as a cofactor. Requires Mg(2+) as cofactor.

In terms of biological role, probably mediates the hydrolysis of some nucleoside diphosphate derivatives. In Schizosaccharomyces pombe (strain 972 / ATCC 24843) (Fission yeast), this protein is Probable nudix hydrolase C6G9.05.